A 396-amino-acid polypeptide reads, in one-letter code: Elongation factor Tu (396 aa).

The 197-residue stretch at 10–206 (KPHVNIGTIG…AVDESVPDPV (197 aa)) folds into the tr-type G domain. A G1 region spans residues 19 to 26 (GHVDHGKT). 19 to 26 (GHVDHGKT) contributes to the GTP binding site. T26 is a Mg(2+) binding site. Residues 62-66 (GITIN) are G2. The tract at residues 83–86 (DAPG) is G3. GTP is bound by residues 83–87 (DAPGH) and 138–141 (NKSD). The G4 stretch occupies residues 138–141 (NKSD). The G5 stretch occupies residues 176–178 (SGL).

It belongs to the TRAFAC class translation factor GTPase superfamily. Classic translation factor GTPase family. EF-Tu/EF-1A subfamily. Monomer.

The protein resides in the cytoplasm. It catalyses the reaction GTP + H2O = GDP + phosphate + H(+). In terms of biological role, GTP hydrolase that promotes the GTP-dependent binding of aminoacyl-tRNA to the A-site of ribosomes during protein biosynthesis. The protein is Elongation factor Tu of Pseudarthrobacter chlorophenolicus (strain ATCC 700700 / DSM 12829 / CIP 107037 / JCM 12360 / KCTC 9906 / NCIMB 13794 / A6) (Arthrobacter chlorophenolicus).